A 151-amino-acid chain; its full sequence is Small ribosomal subunit protein uS15 (151 aa).

Phosphoserine occurs at positions 21 and 32.

This sequence belongs to the universal ribosomal protein uS15 family. As to quaternary structure, component of the small ribosomal subunit (SSU). Mature yeast ribosomes consist of a small (40S) and a large (60S) subunit. The 40S small subunit contains 1 molecule of ribosomal RNA (18S rRNA) and at least 33 different proteins. The large 60S subunit contains 3 rRNA molecules (25S, 5.8S and 5S rRNA) and at least 46 different proteins.

It localises to the cytoplasm. Functionally, component of the ribosome, a large ribonucleoprotein complex responsible for the synthesis of proteins in the cell. The small ribosomal subunit (SSU) binds messenger RNAs (mRNAs) and translates the encoded message by selecting cognate aminoacyl-transfer RNA (tRNA) molecules. The large subunit (LSU) contains the ribosomal catalytic site termed the peptidyl transferase center (PTC), which catalyzes the formation of peptide bonds, thereby polymerizing the amino acids delivered by tRNAs into a polypeptide chain. The nascent polypeptides leave the ribosome through a tunnel in the LSU and interact with protein factors that function in enzymatic processing, targeting, and the membrane insertion of nascent chains at the exit of the ribosomal tunnel. This is Small ribosomal subunit protein uS15 (rps13) from Schizosaccharomyces pombe (strain 972 / ATCC 24843) (Fission yeast).